The primary structure comprises 136 residues: Putative zinc finger protein 818 (136 aa).

The C2H2-type 1; degenerate zinc-finger motif lies at 64 to 83 (NVCGKVLSQNSHLVNHQRIH). Residues 89–111 (YRCHECGKAFTQGSRFINHQIVH) form a C2H2-type 2 zinc finger.

The protein belongs to the krueppel C2H2-type zinc-finger protein family.

The protein resides in the nucleus. In terms of biological role, may be involved in transcriptional regulation. The chain is Putative zinc finger protein 818 (ZNF818P) from Homo sapiens (Human).